Reading from the N-terminus, the 348-residue chain is Inosamine-phosphate amidinotransferase 1 (348 aa).

Residues Asp179 and His227 contribute to the active site. The active-site Amidino-cysteine intermediate is Cys332.

Belongs to the amidinotransferase family. Homodimer.

It carries out the reaction 1-amino-1-deoxy-scyllo-inositol 4-phosphate + L-arginine = 1-guanidino-1-deoxy-scyllo-inositol 4-phosphate + L-ornithine. It participates in antibiotic biosynthesis; streptomycin biosynthesis. In terms of biological role, catalyzes two non-consecutive transamidination reactions. It converts scyllo-inosamine 4-phosphate into N-amidino-scyllo-inosamine 4-phosphate and N1-amidinostreptamine 6-phosphate into streptidine 6-phosphate. This chain is Inosamine-phosphate amidinotransferase 1 (strB1), found in Streptomyces glaucescens.